The following is a 712-amino-acid chain: Patatin-like phospholipase domain-containing protein NFIA_019760 (712 aa).

Residues 1-13 are compositionally biased toward basic and acidic residues; that stretch reads MTSDEKSATRDIY. The tract at residues 1–21 is disordered; the sequence is MTSDEKSATRDIYDPNTLPDY. Residues 85–105 traverse the membrane as a helical segment; sequence WPFLFTVFAWITVLGFAYTLT. The PNPLA domain occupies 275–466; sequence LCLSGGATFA…RTDIPIKALN (192 aa). Positions 306–310 match the GXSXG motif; the sequence is GTSGG. Serine 308 serves as the catalytic Nucleophile. Aspartate 453 acts as the Proton acceptor in catalysis. The tract at residues 628–687 is disordered; the sequence is RRRQDRAEEHADRMVERLDQSFPERQSDYKDESHYTEVSDSLSATSSRPHTPDARRSSMF. Composition is skewed to basic and acidic residues over residues 632–646 and 652–664; these read DRAE…ERLD and RQSD…HYTE. Polar residues predominate over residues 665-676; the sequence is VSDSLSATSSRP. Positions 677–687 are enriched in basic and acidic residues; it reads HTPDARRSSMF.

This sequence belongs to the PLPL family.

The protein resides in the membrane. Probable lipid hydrolase. This is Patatin-like phospholipase domain-containing protein NFIA_019760 from Neosartorya fischeri (strain ATCC 1020 / DSM 3700 / CBS 544.65 / FGSC A1164 / JCM 1740 / NRRL 181 / WB 181) (Aspergillus fischerianus).